Consider the following 438-residue polypeptide: Dihydrolipoyllysine-residue acetyltransferase component of pyruvate dehydrogenase complex (438 aa).

One can recognise a Lipoyl-binding domain in the interval 1–76; that stretch reads MFKVKFADIG…KVGDVVMEIE (76 aa). N6-lipoyllysine is present on lysine 42. Residues 132–169 enclose the Peripheral subunit-binding (PSBD) domain; the sequence is KATPLARKVAADLNIDLSLVTPTGPNQRILVADIKNHQ. Residues 172–181 are compositionally biased toward polar residues; that stretch reads STQLASQPIS. Residues 172–192 are disordered; sequence STQLASQPISQPAPTPSPSAH. Residue histidine 411 is part of the active site.

This sequence belongs to the 2-oxoacid dehydrogenase family. Forms a 24-polypeptide structural core with octahedral symmetry. (R)-lipoate serves as cofactor.

It carries out the reaction N(6)-[(R)-dihydrolipoyl]-L-lysyl-[protein] + acetyl-CoA = N(6)-[(R)-S(8)-acetyldihydrolipoyl]-L-lysyl-[protein] + CoA. Functionally, the pyruvate dehydrogenase complex catalyzes the overall conversion of pyruvate to acetyl-CoA and CO(2). It contains multiple copies of three enzymatic components: pyruvate dehydrogenase (E1), dihydrolipoamide acetyltransferase (E2) and lipoamide dehydrogenase (E3). The chain is Dihydrolipoyllysine-residue acetyltransferase component of pyruvate dehydrogenase complex (pdhC) from Mycoplasma capricolum subsp. capricolum (strain California kid / ATCC 27343 / NCTC 10154).